We begin with the raw amino-acid sequence, 199 residues long: Imidazole glycerol phosphate synthase subunit HisH (199 aa).

A Glutamine amidotransferase type-1 domain is found at 3 to 199; the sequence is NITIIDTGCA…LKNFVEKVPF (197 aa). The Nucleophile role is filled by Cys78. Active-site residues include His178 and Glu180.

In terms of assembly, heterodimer of HisH and HisF.

It localises to the cytoplasm. The enzyme catalyses 5-[(5-phospho-1-deoxy-D-ribulos-1-ylimino)methylamino]-1-(5-phospho-beta-D-ribosyl)imidazole-4-carboxamide + L-glutamine = D-erythro-1-(imidazol-4-yl)glycerol 3-phosphate + 5-amino-1-(5-phospho-beta-D-ribosyl)imidazole-4-carboxamide + L-glutamate + H(+). It catalyses the reaction L-glutamine + H2O = L-glutamate + NH4(+). Its pathway is amino-acid biosynthesis; L-histidine biosynthesis; L-histidine from 5-phospho-alpha-D-ribose 1-diphosphate: step 5/9. In terms of biological role, IGPS catalyzes the conversion of PRFAR and glutamine to IGP, AICAR and glutamate. The HisH subunit catalyzes the hydrolysis of glutamine to glutamate and ammonia as part of the synthesis of IGP and AICAR. The resulting ammonia molecule is channeled to the active site of HisF. In Haemophilus influenzae (strain ATCC 51907 / DSM 11121 / KW20 / Rd), this protein is Imidazole glycerol phosphate synthase subunit HisH (hisH).